Consider the following 251-residue polypeptide: Probable transcriptional regulatory protein DehaBAV1_0421 (251 aa).

This sequence belongs to the TACO1 family.

It is found in the cytoplasm. This Dehalococcoides mccartyi (strain ATCC BAA-2100 / JCM 16839 / KCTC 5957 / BAV1) protein is Probable transcriptional regulatory protein DehaBAV1_0421.